Reading from the N-terminus, the 302-residue chain is Glutaminase (302 aa).

Residues serine 61, asparagine 111, glutamate 155, asparagine 162, tyrosine 186, tyrosine 238, and valine 256 each coordinate substrate.

It belongs to the glutaminase family. As to quaternary structure, homotetramer.

The catalysed reaction is L-glutamine + H2O = L-glutamate + NH4(+). This chain is Glutaminase, found in Pseudomonas fluorescens (strain Pf0-1).